Reading from the N-terminus, the 84-residue chain is Large ribosomal subunit protein bL27 (84 aa).

Residues 1–22 (MAHKKGGGSTKNGRDSNPKYLG) are disordered.

The protein belongs to the bacterial ribosomal protein bL27 family.

The chain is Large ribosomal subunit protein bL27 from Prosthecochloris aestuarii (strain DSM 271 / SK 413).